The primary structure comprises 852 residues: Potassium voltage-gated channel subfamily KQT member 2 (852 aa).

The Cytoplasmic portion of the chain corresponds to Met-1 to Gly-90. Ser-52 is modified (phosphoserine; by PKA). Residues Trp-91 to Ser-113 traverse the membrane as a helical segment. Topologically, residues Thr-114–Glu-123 are extracellular. The chain crosses the membrane as a helical span at residues Gly-124–Ile-145. The Cytoplasmic portion of the chain corresponds to Trp-146–Phe-163. A helical membrane pass occupies residues Ala-164 to Leu-183. The Extracellular segment spans residues Ala-184 to Ala-196. The chain crosses the membrane as a helical; Voltage-sensor span at residues Leu-197 to Gly-215. Arg-214 serves as a coordination point for a 1,2-diacyl-sn-glycero-3-phospho-(1D-myo-inositol-4,5-bisphosphate). At Gly-216 to Ala-227 the chain is on the cytoplasmic side. The segment at Gly-222–Gln-323 is mediates interaction with SLC5A3. The helical transmembrane segment at His-228–Ala-253 threads the bilayer. Lys-230 provides a ligand contact to a 1,2-diacyl-sn-glycero-3-phospho-(1D-myo-inositol-4,5-bisphosphate). Residues Glu-254–Thr-263 lie on the Extracellular side of the membrane. The pore-forming intramembrane region spans Tyr-264 to Thr-276. Positions Thr-277 to Asp-282 match the Selectivity filter motif. The Extracellular portion of the chain corresponds to Thr-277 to Thr-287. The helical transmembrane segment at Trp-288–Ser-314 threads the bilayer. At Gly-315 to Lys-852 the chain is on the cytoplasmic side. The segment at Ala-317–Ser-522 is mediates interaction with calmodulin. A 1,2-diacyl-sn-glycero-3-phospho-(1D-myo-inositol-4,5-bisphosphate) is bound at residue Lys-327. Positions Thr-404–Gly-469 are disordered. The segment covering Pro-440–Asp-457 has biased composition (polar residues). 6 positions are modified to phosphoserine: Ser-448, Ser-450, Ser-454, Ser-458, Ser-460, and Ser-489. Disordered regions lie at residues Gly-579 to Ser-601, Gly-643 to His-662, and Ile-672 to Ser-718. The segment covering Thr-583 to Ala-592 has biased composition (basic and acidic residues). Residue Ser-655 is modified to Phosphoserine. Phosphoserine occurs at positions 781 and 783. The interval Glu-818–Lys-852 is disordered.

Belongs to the potassium channel family. KQT (TC 1.A.1.15) subfamily. Kv7.2/KCNQ2 sub-subfamily. In terms of assembly, heterotetramer with KCNQ3; forms heterotetrameric M-channel responsible for the M-current. Homotetrameric; forms a functional homotetrameric channel resulting in the expression of a small M-current. Interacts with calmodulin; the interaction is calcium-independent, constitutive and participates in the proper assembly of a functional M-channel. May associate with KCNE2. Interacts with IQCJ-SCHIP1. Interacts (via the pore module) with SLC5A3/SMIT1; forms a coregulatory complex that alters ion selectivity, voltage dependence and gating kinetics of the channel. Interacts with AKAP5; the interaction may help KCNQ2 channel complex to retain calcium-bound calmodulin. KCNQ2/KCNQ3 heteromeric current can be increased by intracellular cyclic AMP, an effect that depends on phosphorylation of Ser-52 in the N-terminal region. Post-translationally, KCNQ2/KCNQ3 are ubiquitinated by NEDD4L. Ubiquitination leads to protein degradation. Degradation induced by NEDD4L is inhibited by USP36. Expressed in brain and sympathetic ganglia. In brain, expressed in cortex, hippocampus, and cerebellum. In sympathetic ganglia, expressed at lower levels in celiac ganglia and superior mesenteric ganglia than in superior cervical ganglia.

The protein localises to the cell membrane. It carries out the reaction K(+)(in) = K(+)(out). The catalysed reaction is Rb(+)(in) = Rb(+)(out). It catalyses the reaction Cs(+)(in) = Cs(+)(out). The enzyme catalyses Na(+)(in) = Na(+)(out). Its activity is regulated as follows. Phosphatidylinositol-4,5-bisphosphate (PIP2) potentiates the activation of KCNQ channels by enhancing the electro-mechanical coupling of the voltage-sensing domain (VSD) and the pore-forming domain (PD). In the closed state of the channel, PIP2 is anchored at the S2-S3 loop; upon channel activation, PIP2 interacts with the S4-S5 linker and is involved in channel gating. Calcium suppresses KCNQ2 and KCNQ2-KCNQ3 channel currents, with calcium-bound calmodulin inducing a change in channel configuration which leads to the reduction of channel affinity for PIP2 and subsequent current suppression. In terms of biological role, pore-forming subunit of the voltage-gated potassium (Kv) M-channel which is responsible for the M-current, a key controller of neuronal excitability. M-channel is composed of pore-forming subunits KCNQ2 and KCNQ3 assembled as heterotetramers. The native M-current has a slowly activating and deactivating potassium conductance which plays a critical role in determining the subthreshold electrical excitability of neurons as well as the responsiveness to synaptic inputs. M-channel is selectively permeable in vitro to other cations besides potassium, in decreasing order of affinity K(+) &gt; Rb(+) &gt; Cs(+) &gt; Na(+). M-channel association with SLC5A3/SMIT1 alters channel ion selectivity, increasing Na(+) and Cs(+) permeation relative to K(+). Suppressed by activation of the muscarinic acetylcholine receptor CHRM1. This chain is Potassium voltage-gated channel subfamily KQT member 2, found in Rattus norvegicus (Rat).